Consider the following 727-residue polypeptide: MNANEEGEGSRYPITDRKTGETKFDRVESRTEKHSEEEKTNGITMDVRNGSSGGLQIPLSQQTAATVCWERFLHVRTIRVLLVENDDCTRYIVTALLRNCSYEVVEASNGIQAWKVLEDLNNHIDIVLTEVIMPYLSGIGLLCKILNHKSRRNIPVIMMSSHDSMGLVFKCLSKGAVDFLVKPIRKNELKILWQHVWRRCQSSSGSGSESGTHQTQKSVKSKSIKKSDQDSGSSDENENGSIGLNASDGSSDGSGAQSSWTKKAVDVDDSPRAVSLWDRVDSTCAQVVHSNPEFPSNQLVAPPAEKETQEHDDKFEDVTMGRDLEISIRRNCDLALEPKDEPLSKTTGIMRQDNSFEKSSSKWKMKVGKGPLDLSSESPSSKQMHEDGGSSFKAMSSHLQDNREPEAPNTHLKTLDTNEASVKISEELMHVEHSSKRHRGTKDDGTLVRDDRNVLRRSEGSAFSRYNPASNANKISGGNLGSTSLQDNNSQDLIKKTEAAYDCHSNMNESLPHNHRSHVGSNNFDMSSTTENNAFTKPGAPKVSSAGSSSVKHSSFQPLPCDHHNNHASYNLVHVAERKKLPPQCGSSNVYNETIEGNNNTVNYSVNGSVSGSGHGSNGPYGSSNGMNAGGMNMGSDNGAGKNGNGDGSGSGSGSGSGNLADENKISQREAALTKFRQKRKERCFRKKVRYQSRKKLAEQRPRVRGQFVRKTAAATDDNDIKNIEDS.

The segment at Met1–Val47 is disordered. Over residues Ile14–Thr40 the composition is skewed to basic and acidic residues. The region spanning Arg79–Trp197 is the Response regulatory domain. Disordered stretches follow at residues Ser203 to Val265, Asn291 to Asp312, Lys339 to Asp416, Ser464 to Asp487, Glu509 to Pro560, and Val606 to Glu670. The segment covering Ala246 to Ser259 has biased composition (low complexity). Polar residues-rich tracts occupy residues Ser344–Asp353, Asn467–Asp487, and Val519–Phe535. The span at Pro538 to Ser555 shows a compositional bias: low complexity. Over residues Gly641–Ser657 the composition is skewed to gly residues. A CCT domain is found at Arg669–Lys711.

It belongs to the ARR-like family. Post-translationally, phosphorylated. Phosphorylation varies throughout the diurnal cycle.

It localises to the nucleus. Its function is as follows. Transcriptional repressor of CCA1 and LHY, and positive regulator of LWD1 and LWD2 expression. Represses the expression of other clock proteins and master regulators of plant growth, development and response to abiotic stress. Involved in the positive and negative feedback loops of the circadian clock. Controls photoperiodic flowering response and temperature compensation. Expression of several members of the ARR-like family is controlled by circadian rhythm. APRR9, APRR7, and APRR5 coordinately act on the upstream region of the target genes to repress their expression from noon until midnight. The particular coordinated sequential expression of APRR9, APRR7, APRR5, APRR3 and APPR1 result to circadian waves that may be at the basis of the endogenous circadian clock. In Arabidopsis thaliana (Mouse-ear cress), this protein is Two-component response regulator-like APRR7 (APRR7).